The following is a 117-amino-acid chain: UPF0342 protein Bcer98_0695 (117 aa).

It belongs to the UPF0342 family.

The protein is UPF0342 protein Bcer98_0695 of Bacillus cytotoxicus (strain DSM 22905 / CIP 110041 / 391-98 / NVH 391-98).